The chain runs to 40 residues: Dolichyl-diphosphooligosaccharide--protein glycosyltransferase subunit 4 (40 aa).

The Lumenal portion of the chain corresponds to 1–4 (MITD). A helical transmembrane segment spans residues 5 to 25 (VQLAIFSNVLGVFLFLLVVAY). Over 26–40 (HYINANTGKPSAKAK) the chain is Cytoplasmic.

It belongs to the OST4 family. In terms of assembly, component of the oligosaccharyltransferase (OST) complex.

Its subcellular location is the endoplasmic reticulum membrane. Its function is as follows. Subunit of the oligosaccharyl transferase (OST) complex that catalyzes the initial transfer of a defined glycan (Glc(3)Man(9)GlcNAc(2) in eukaryotes) from the lipid carrier dolichol-pyrophosphate to an asparagine residue within an Asn-X-Ser/Thr consensus motif in nascent polypeptide chains, the first step in protein N-glycosylation. N-glycosylation occurs cotranslationally and the complex associates with the Sec61 complex at the channel-forming translocon complex that mediates protein translocation across the endoplasmic reticulum (ER). All subunits are required for a maximal enzyme activity. The sequence is that of Dolichyl-diphosphooligosaccharide--protein glycosyltransferase subunit 4 from Drosophila erecta (Fruit fly).